The primary structure comprises 1188 residues: Probable phosphoenolpyruvate synthase (1188 aa).

In terms of domain architecture, DOD-type homing endonuclease spans 536–670 (LGGAVLSDGH…LIVGLYRLGI (135 aa)). H824 serves as the catalytic Tele-phosphohistidine intermediate. Substrate-binding residues include R917, R964, E1061, G1083, T1084, N1085, and D1086. A Mg(2+)-binding site is contributed by E1061. Residue D1086 participates in Mg(2+) binding. The active-site Proton donor is C1133.

The protein belongs to the PEP-utilizing enzyme family. The cofactor is Mg(2+). This protein undergoes a protein self splicing that involves a post-translational excision of the intervening region (intein) followed by peptide ligation.

The enzyme catalyses pyruvate + ATP + H2O = phosphoenolpyruvate + AMP + phosphate + 2 H(+). It functions in the pathway carbohydrate biosynthesis; gluconeogenesis. Its function is as follows. Catalyzes the phosphorylation of pyruvate to phosphoenolpyruvate. This chain is Probable phosphoenolpyruvate synthase (ppsA), found in Methanocaldococcus jannaschii (strain ATCC 43067 / DSM 2661 / JAL-1 / JCM 10045 / NBRC 100440) (Methanococcus jannaschii).